A 625-amino-acid chain; its full sequence is Procollagen galactosyltransferase 2 (625 aa).

Positions 1 to 26 (MAARLATVACALFLLSSALLRLGCRA) are cleaved as a signal peptide. Asn96, Asn184, Asn381, and Asn579 each carry an N-linked (GlcNAc...) asparagine glycan. Residues 597–625 (QGHIRSTAKNTEALPPPTSLDTVPSRDEL) form a disordered region. A Prevents secretion from ER motif is present at residues 622 to 625 (RDEL).

The protein belongs to the glycosyltransferase 25 family.

The protein resides in the endoplasmic reticulum lumen. The catalysed reaction is (5R)-5-hydroxy-L-lysyl-[collagen] + UDP-alpha-D-galactose = (5R)-5-O-(beta-D-galactosyl)-5-hydroxy-L-lysyl-[collagen] + UDP + H(+). Functionally, beta-galactosyltransferase that transfers beta-galactose to hydroxylysine residues of collagen. In Mus musculus (Mouse), this protein is Procollagen galactosyltransferase 2 (Colgalt2).